Here is a 637-residue protein sequence, read N- to C-terminus: DNA damage-binding protein CMR1 (637 aa).

Disordered stretches follow at residues 1–91 (MIES…EEEA) and 144–168 (LVDT…TERR). Composition is skewed to basic and acidic residues over residues 8–23 (EQER…RLMK) and 74–91 (AGHE…EEEA). 5 WD repeats span residues 185–226 (VTPK…FASN), 255–295 (HARS…SEEI), 297–321 (AGEE…VYMD), 361–401 (VCEK…SVVK), and 431–470 (KARQ…LFSE). Disordered stretches follow at residues 482–508 (SNKP…LSWL) and 525–549 (KQEQ…PTRI). WD repeat units lie at residues 556 to 598 (GKWL…LRSL) and 602 to 637 (NLVT…SPDP).

The protein belongs to the WD repeat DDB2/WDR76 family.

DNA-binding protein that binds to both single- and double-stranded DNA. Binds preferentially to UV-damaged DNA. May be involved in DNA-metabolic processes. This Mycosarcoma maydis (Corn smut fungus) protein is DNA damage-binding protein CMR1.